The primary structure comprises 369 residues: Large ribosomal subunit protein uL4 (369 aa).

Threonine 2 bears the N-acetylthreonine mark.

It belongs to the universal ribosomal protein uL4 family.

This is Large ribosomal subunit protein uL4 (rpl4) from Dictyostelium discoideum (Social amoeba).